The sequence spans 560 residues: NAD(P)H-quinone oxidoreductase chain 4-3 (560 aa).

Helical transmembrane passes span Phe-5–Leu-25, Trp-35–His-55, Ile-86–Trp-106, Leu-114–Asp-134, Leu-135–Ile-155, Phe-168–Leu-188, Ala-208–Phe-228, Ser-242–Ile-262, His-273–Leu-293, Val-310–Gly-330, Ala-331–Val-351, Val-374–Phe-394, Val-417–Leu-437, and Val-488–Ala-508.

Belongs to the complex I subunit 4 family.

The protein resides in the cellular thylakoid membrane. It catalyses the reaction a plastoquinone + NADH + (n+1) H(+)(in) = a plastoquinol + NAD(+) + n H(+)(out). The catalysed reaction is a plastoquinone + NADPH + (n+1) H(+)(in) = a plastoquinol + NADP(+) + n H(+)(out). NDH-1 shuttles electrons from NAD(P)H, via FMN and iron-sulfur (Fe-S) centers, to quinones in the respiratory chain. The immediate electron acceptor for the enzyme in this species is believed to be plastoquinone. Couples the redox reaction to proton translocation (for every two electrons transferred, four hydrogen ions are translocated across the cytoplasmic membrane), and thus conserves the redox energy in a proton gradient. This is NAD(P)H-quinone oxidoreductase chain 4-3 (ndhD3) from Nostoc sp. (strain PCC 7120 / SAG 25.82 / UTEX 2576).